The sequence spans 260 residues: Snake venom serine protease homolog 1 (260 aa).

The signal sequence occupies residues M1–A18. Positions Q19–L24 are excised as a propeptide. In terms of domain architecture, Peptidase S1 spans I25–A251. Intrachain disulfides connect C31/C165, C52/C68, C100/C258, C144/C212, C176/C191, and C202/C227. 3 N-linked (GlcNAc...) asparagine glycosylation sites follow: N83, N123, and N124.

This sequence belongs to the peptidase S1 family. Snake venom subfamily. Expressed by the venom gland.

The protein resides in the secreted. Functionally, snake venom serine protease homolog that may act in the hemostasis system of the prey. This chain is Snake venom serine protease homolog 1, found in Trimeresurus stejnegeri (Chinese green tree viper).